The chain runs to 752 residues: Iron-sulfur clusters transporter ABCB7, mitochondrial (752 aa).

A mitochondrion-targeting transit peptide spans Met1–Arg22. The Mitochondrial matrix segment spans residues His23–Val140. Positions Val140–Gln436 constitute an ABC transmembrane type-1 domain. Residues Ala141 to Phe161 traverse the membrane as a helical segment. Residues Lys162 to Val185 are Mitochondrial intermembrane-facing. A helical membrane pass occupies residues Ala186–Phe206. The Mitochondrial matrix segment spans residues Asn207–Gly259. Lys216 and Lys251 each carry N6-acetyllysine. A helical transmembrane segment spans residues Ile260–Leu280. The Mitochondrial intermembrane segment spans residues Val281 to Gly290. The helical transmembrane segment at Ala291 to Val311 threads the bilayer. Topologically, residues Thr312–Ser382 are mitochondrial matrix. Arg315 to Arg319 serves as a coordination point for glutathione. Ser336 bears the Phosphoserine mark. Tyr340 carries the post-translational modification Phosphotyrosine. Thr342 is subject to Phosphothreonine. Asn378–Gln381 lines the glutathione pocket. The chain crosses the membrane as a helical span at residues Ala383–Gly403. Residues Thr404–Asp409 lie on the Mitochondrial intermembrane side of the membrane. The chain crosses the membrane as a helical span at residues Leu410–Val430. Residue Gly428 participates in glutathione binding. Topologically, residues Tyr431–Cys752 are mitochondrial matrix. Residues Val472–His706 enclose the ABC transporter domain. ATP contacts are provided by residues Tyr481 and Gly505–Arg516.

This sequence belongs to the ABC transporter superfamily. ABCB family. Heavy Metal importer (TC 3.A.1.210) subfamily. As to quaternary structure, homodimer or heterodimer. Interacts with C10orf88/PAAT. Forms a complex with ABCB10 and FECH, where a dimeric FECH bridges ABCB7 and ABCB10 homodimers; this complex may be required for cellular iron homeostasis, mitochondrial function and heme biosynthesis. Interacts with FECH. Interacts with ATP5F1A. Interacts with COX4I1; this interaction allows the regulation of cellular iron homeostasis and cellular reactive oxygen species (ROS) levels in cardiomyocytes.

The protein localises to the mitochondrion inner membrane. The enzyme catalyses (glutathione)4[2Fe(III)-2S] cluster(in) + ATP + H2O = (glutathione)4[2Fe(III)-2S] cluster(out) + ADP + phosphate + H(+). ATPase activity is stimulated by glutathione. Functionally, exports glutathione-coordinated iron-sulfur clusters such as [2Fe-2S]-(GS)4 cluster from the mitochondria to the cytosol in an ATP-dependent manner allowing the assembly of the cytosolic iron-sulfur (Fe/S) cluster-containing proteins and participates in iron homeostasis. Moreover, through a functional complex formed of ABCB7, FECH and ABCB10, also plays a role in the cellular iron homeostasis, mitochondrial function and heme biosynthesis. In cardiomyocytes, regulates cellular iron homeostasis and cellular reactive oxygen species (ROS) levels through its interaction with COX4I1. May also play a role in hematopoiesis. This Homo sapiens (Human) protein is Iron-sulfur clusters transporter ABCB7, mitochondrial.